We begin with the raw amino-acid sequence, 429 residues long: Enolase (429 aa).

Q163 lines the (2R)-2-phosphoglycerate pocket. Residue E205 is the Proton donor of the active site. 3 residues coordinate Mg(2+): D242, E285, and D312. Residues K337, R366, S367, and K388 each contribute to the (2R)-2-phosphoglycerate site. K337 (proton acceptor) is an active-site residue.

This sequence belongs to the enolase family. The cofactor is Mg(2+).

The protein localises to the cytoplasm. It is found in the secreted. The protein resides in the cell surface. The catalysed reaction is (2R)-2-phosphoglycerate = phosphoenolpyruvate + H2O. The protein operates within carbohydrate degradation; glycolysis; pyruvate from D-glyceraldehyde 3-phosphate: step 4/5. Its function is as follows. Catalyzes the reversible conversion of 2-phosphoglycerate (2-PG) into phosphoenolpyruvate (PEP). It is essential for the degradation of carbohydrates via glycolysis. This is Enolase from Methylorubrum extorquens (strain CM4 / NCIMB 13688) (Methylobacterium extorquens).